Consider the following 330-residue polypeptide: Ketol-acid reductoisomerase (NADP(+)) (330 aa).

The KARI N-terminal Rossmann domain maps to 2 to 182; the sequence is VETFYEKDAD…GCTRAGVIKT (181 aa). NADP(+)-binding positions include 25 to 28, K48, S51, S53, and 83 to 86; these read YGSQ and DEVQ. H108 is a catalytic residue. G134 is a binding site for NADP(+). The KARI C-terminal knotted domain maps to 183–328; the sequence is TFKEETETDL…EKLRAMMPWI (146 aa). Residues D191, E195, E227, and E231 each coordinate Mg(2+). A substrate-binding site is contributed by S252.

Belongs to the ketol-acid reductoisomerase family. Mg(2+) serves as cofactor.

The catalysed reaction is (2R)-2,3-dihydroxy-3-methylbutanoate + NADP(+) = (2S)-2-acetolactate + NADPH + H(+). It catalyses the reaction (2R,3R)-2,3-dihydroxy-3-methylpentanoate + NADP(+) = (S)-2-ethyl-2-hydroxy-3-oxobutanoate + NADPH + H(+). It participates in amino-acid biosynthesis; L-isoleucine biosynthesis; L-isoleucine from 2-oxobutanoate: step 2/4. The protein operates within amino-acid biosynthesis; L-valine biosynthesis; L-valine from pyruvate: step 2/4. Functionally, involved in the biosynthesis of branched-chain amino acids (BCAA). Catalyzes an alkyl-migration followed by a ketol-acid reduction of (S)-2-acetolactate (S2AL) to yield (R)-2,3-dihydroxy-isovalerate. In the isomerase reaction, S2AL is rearranged via a Mg-dependent methyl migration to produce 3-hydroxy-3-methyl-2-ketobutyrate (HMKB). In the reductase reaction, this 2-ketoacid undergoes a metal-dependent reduction by NADPH to yield (R)-2,3-dihydroxy-isovalerate. This is Ketol-acid reductoisomerase (NADP(+)) from Petrotoga mobilis (strain DSM 10674 / SJ95).